Consider the following 360-residue polypeptide: Peptide chain release factor 1 (360 aa).

Gln237 carries the post-translational modification N5-methylglutamine.

Belongs to the prokaryotic/mitochondrial release factor family. Post-translationally, methylated by PrmC. Methylation increases the termination efficiency of RF1.

The protein localises to the cytoplasm. Functionally, peptide chain release factor 1 directs the termination of translation in response to the peptide chain termination codons UAG and UAA. The sequence is that of Peptide chain release factor 1 from Pseudomonas fluorescens (strain ATCC BAA-477 / NRRL B-23932 / Pf-5).